Consider the following 397-residue polypeptide: Arginine biosynthesis bifunctional protein ArgJ (397 aa).

The substrate site is built by Thr147, Lys173, Thr184, Glu270, Asn392, and Thr397. Thr184 serves as the catalytic Nucleophile.

It belongs to the ArgJ family. As to quaternary structure, heterotetramer of two alpha and two beta chains.

It localises to the cytoplasm. It catalyses the reaction N(2)-acetyl-L-ornithine + L-glutamate = N-acetyl-L-glutamate + L-ornithine. The enzyme catalyses L-glutamate + acetyl-CoA = N-acetyl-L-glutamate + CoA + H(+). The protein operates within amino-acid biosynthesis; L-arginine biosynthesis; L-ornithine and N-acetyl-L-glutamate from L-glutamate and N(2)-acetyl-L-ornithine (cyclic): step 1/1. It participates in amino-acid biosynthesis; L-arginine biosynthesis; N(2)-acetyl-L-ornithine from L-glutamate: step 1/4. Functionally, catalyzes two activities which are involved in the cyclic version of arginine biosynthesis: the synthesis of N-acetylglutamate from glutamate and acetyl-CoA as the acetyl donor, and of ornithine by transacetylation between N(2)-acetylornithine and glutamate. This Streptococcus thermophilus (strain ATCC BAA-250 / LMG 18311) protein is Arginine biosynthesis bifunctional protein ArgJ.